A 142-amino-acid polypeptide reads, in one-letter code: Peptide methionine sulfoxide reductase MsrB (142 aa).

The region spanning 10 to 132 is the MsrB domain; that stretch reads EEEWKKVLTP…NSVSLNFKTE (123 aa). Positions 49, 52, 98, and 101 each coordinate Zn(2+). C121 functions as the Nucleophile in the catalytic mechanism.

The protein belongs to the MsrB Met sulfoxide reductase family. Zn(2+) serves as cofactor.

It catalyses the reaction L-methionyl-[protein] + [thioredoxin]-disulfide + H2O = L-methionyl-(R)-S-oxide-[protein] + [thioredoxin]-dithiol. This is Peptide methionine sulfoxide reductase MsrB from Methanosarcina barkeri (strain Fusaro / DSM 804).